A 267-amino-acid chain; its full sequence is Indole-3-glycerol phosphate synthase (267 aa).

Belongs to the TrpC family.

It carries out the reaction 1-(2-carboxyphenylamino)-1-deoxy-D-ribulose 5-phosphate + H(+) = (1S,2R)-1-C-(indol-3-yl)glycerol 3-phosphate + CO2 + H2O. Its pathway is amino-acid biosynthesis; L-tryptophan biosynthesis; L-tryptophan from chorismate: step 4/5. In Verminephrobacter eiseniae (strain EF01-2), this protein is Indole-3-glycerol phosphate synthase.